The primary structure comprises 462 residues: Chitinase-like mite allergen Der f 18.0101 (462 aa).

The N-terminal stretch at 1–25 (MTRFSLTVLAVLAACFGSNIRPNVA) is a signal peptide. In terms of domain architecture, GH18 spans 29–378 (PKTVCYYESW…HAIQSNYYHG (350 aa)). A disulfide bridge links Cys-33 with Cys-58. Asn-338 is a glycosylation site (N-linked (GlcNAc...) asparagine). In terms of domain architecture, Chitin-binding type-2 spans 404 to 462 (VFHCHEEGFFRDKTYCATYYECKKGDFGLEKTVHHCANHLQAFDEVSRTCIDHTKIPGC). The cysteines at positions 439 and 453 are disulfide-linked.

Belongs to the glycosyl hydrolase 18 family. Chitinase class II subfamily. In terms of tissue distribution, expressed in the upper digestive tract. Staining is observed in the ventriculus, and in very rare individuals, also in the intestine or esophagus. No expression in fecal pellets neither inside the rectum nor defecated outside of the body.

It is found in the secreted. Its function is as follows. Probably a non-catalytic chitinase-like protein, which binds to insoluble chitin and enhances the activity of the catalytic chitinases. Has weak chitin-binding activity. The sequence is that of Chitinase-like mite allergen Der f 18.0101 from Dermatophagoides farinae (American house dust mite).